Reading from the N-terminus, the 458-residue chain is Dihydrolipoyllysine-residue acetyltransferase component of pyruvate dehydrogenase complex, mitochondrial (458 aa).

The N-terminal 28 residues, 1–28 (MIVPVLSRQALRHASVARVALPSLTRWY), are a transit peptide targeting the mitochondrion. Residues 34–110 (HTVVKMPALS…AVGNPIAILV (77 aa)) form the Lipoyl-binding domain. Residue Lys75 is modified to N6-lipoyllysine. Residues 126–164 (DAGGETSPAVPKDEPKNESTASAPTPAPTPAPEPENTSF) form a disordered region. The Peripheral subunit-binding (PSBD) domain occupies 177 to 214 (NALPAAKRLAREKGIDLRNVKGSGPGGKITEEDVKKAL). Active-site residues include His431 and Asp435.

Belongs to the 2-oxoacid dehydrogenase family. It depends on (R)-lipoate as a cofactor.

Its subcellular location is the mitochondrion matrix. The enzyme catalyses N(6)-[(R)-dihydrolipoyl]-L-lysyl-[protein] + acetyl-CoA = N(6)-[(R)-S(8)-acetyldihydrolipoyl]-L-lysyl-[protein] + CoA. In terms of biological role, the pyruvate dehydrogenase complex catalyzes the overall conversion of pyruvate to acetyl-CoA and CO(2). It contains multiple copies of three enzymatic components: pyruvate dehydrogenase (E1), dihydrolipoamide acetyltransferase (E2) and lipoamide dehydrogenase (E3). The protein is Dihydrolipoyllysine-residue acetyltransferase component of pyruvate dehydrogenase complex, mitochondrial (mrp-3) of Neurospora crassa (strain ATCC 24698 / 74-OR23-1A / CBS 708.71 / DSM 1257 / FGSC 987).